Consider the following 780-residue polypeptide: RNA-binding protein Pasilla (780 aa).

Disordered regions lie at residues 31-50 (LQHQNQHNSSPQQPQHQQLE), 76-113 (QPRHSTTTSSPSSTHSLASGGGSSSNSSNSSSSDSSSI), and 150-190 (QIES…ATAS). 3 stretches are compositionally biased toward low complexity: residues 79-91 (HSTTTSSPSSTHS), 99-113 (SSNSSNSSSSDSSSI), and 176-190 (PNGTPGAQTPTATAS). 3 KH domains span residues 273 to 340 (TYHM…MEFI), 366 to 432 (DKQV…CKMI), and 691 to 758 (KDSK…QYLI). The segment at 674–693 (AQLGGLSKSPTPGDLSSKDS) is disordered. A required for RNA binding region spans residues 686 to 776 (GDLSSKDSKN…TKRARQIPLT (91 aa)).

As to expression, expressed in the central nervous system in mushroom body neurons (at protein level).

The protein localises to the nucleus. It localises to the cytoplasm. Functionally, functions to regulate alternative splicing in neurons by binding pre-mRNA in a sequence-specific manner to activate exon inclusion. Plays a role in long-term memory formation by processing the unspliced Orb2-isoform A (Orb2A) mRNA and thereby controlling Orb2A protein abundance. The protein is RNA-binding protein Pasilla of Drosophila melanogaster (Fruit fly).